A 48-amino-acid chain; its full sequence is Large ribosomal subunit protein eL40 (48 aa).

It belongs to the eukaryotic ribosomal protein eL40 family.

The chain is Large ribosomal subunit protein eL40 from Methanospirillum hungatei JF-1 (strain ATCC 27890 / DSM 864 / NBRC 100397 / JF-1).